Reading from the N-terminus, the 114-residue chain is Fatty acid-binding protein, liver (114 aa).

This sequence belongs to the calycin superfamily. Fatty-acid binding protein (FABP) family. Post-translationally, the N-terminus is blocked.

It is found in the cytoplasm. Functionally, FABPs are thought to play a role in the intracellular transport of long-chain fatty acids and their acyl-CoA esters. The polypeptide is Fatty acid-binding protein, liver (Lethenteron camtschaticum (Japanese lamprey)).